We begin with the raw amino-acid sequence, 355 residues long: Uroporphyrinogen decarboxylase (355 aa).

Residues 27–31, aspartate 78, tyrosine 155, serine 210, and histidine 328 contribute to the substrate site; that span reads RQAGR.

This sequence belongs to the uroporphyrinogen decarboxylase family. Homodimer.

It is found in the cytoplasm. It catalyses the reaction uroporphyrinogen III + 4 H(+) = coproporphyrinogen III + 4 CO2. It functions in the pathway porphyrin-containing compound metabolism; protoporphyrin-IX biosynthesis; coproporphyrinogen-III from 5-aminolevulinate: step 4/4. Its function is as follows. Catalyzes the decarboxylation of four acetate groups of uroporphyrinogen-III to yield coproporphyrinogen-III. The chain is Uroporphyrinogen decarboxylase from Pseudomonas fluorescens (strain ATCC BAA-477 / NRRL B-23932 / Pf-5).